The primary structure comprises 361 residues: tRNA-specific 2-thiouridylase MnmA (361 aa).

Residues 8 to 15 (GMSGGVDS) and methionine 34 contribute to the ATP site. Positions 94–96 (NPD) are interaction with target base in tRNA. Cysteine 99 serves as the catalytic Nucleophile. Cysteine 99 and cysteine 195 are disulfide-bonded. Glycine 123 is an ATP binding site. Residues 145 to 147 (KDQ) form an interaction with tRNA region. Cysteine 195 (cysteine persulfide intermediate) is an active-site residue. Residues 307 to 308 (RY) form an interaction with tRNA region.

This sequence belongs to the MnmA/TRMU family.

It localises to the cytoplasm. The enzyme catalyses S-sulfanyl-L-cysteinyl-[protein] + uridine(34) in tRNA + AH2 + ATP = 2-thiouridine(34) in tRNA + L-cysteinyl-[protein] + A + AMP + diphosphate + H(+). Catalyzes the 2-thiolation of uridine at the wobble position (U34) of tRNA, leading to the formation of s(2)U34. The polypeptide is tRNA-specific 2-thiouridylase MnmA (Legionella pneumophila subsp. pneumophila (strain Philadelphia 1 / ATCC 33152 / DSM 7513)).